The following is a 299-amino-acid chain: Phosphoribosylaminoimidazole-succinocarboxamide synthase (299 aa).

The protein belongs to the SAICAR synthetase family.

The enzyme catalyses 5-amino-1-(5-phospho-D-ribosyl)imidazole-4-carboxylate + L-aspartate + ATP = (2S)-2-[5-amino-1-(5-phospho-beta-D-ribosyl)imidazole-4-carboxamido]succinate + ADP + phosphate + 2 H(+). The protein operates within purine metabolism; IMP biosynthesis via de novo pathway; 5-amino-1-(5-phospho-D-ribosyl)imidazole-4-carboxamide from 5-amino-1-(5-phospho-D-ribosyl)imidazole-4-carboxylate: step 1/2. The chain is Phosphoribosylaminoimidazole-succinocarboxamide synthase from Desulfatibacillum aliphaticivorans.